We begin with the raw amino-acid sequence, 134 residues long: MAISLKVLAPNKNVYQGEAEEVILPSTTGQLGILPGHISLVTAIDIGVLRLRMNSQWKSIALMGGFAEIESDEVIVLVNNAEIGSEINVQNAEQDLKEAKLAISKFSENEKNPEKIKALKQVSKAEARIQAAKN.

This sequence belongs to the ATPase epsilon chain family. In terms of assembly, F-type ATPases have 2 components, CF(1) - the catalytic core - and CF(0) - the membrane proton channel. CF(1) has five subunits: alpha(3), beta(3), gamma(1), delta(1), epsilon(1). CF(0) has three main subunits: a, b and c.

Its subcellular location is the cellular thylakoid membrane. Its function is as follows. Produces ATP from ADP in the presence of a proton gradient across the membrane. This Prochlorococcus marinus (strain MIT 9215) protein is ATP synthase epsilon chain.